Here is a 100-residue protein sequence, read N- to C-terminus: Urease subunit gamma (100 aa).

It belongs to the urease gamma subunit family. As to quaternary structure, heterotrimer of UreA (gamma), UreB (beta) and UreC (alpha) subunits. Three heterotrimers associate to form the active enzyme.

The protein resides in the cytoplasm. The catalysed reaction is urea + 2 H2O + H(+) = hydrogencarbonate + 2 NH4(+). It participates in nitrogen metabolism; urea degradation; CO(2) and NH(3) from urea (urease route): step 1/1. The protein is Urease subunit gamma of Blochmanniella pennsylvanica (strain BPEN).